Here is an 867-residue protein sequence, read N- to C-terminus: MLGLSKILRMGEGRAVKRLAKIADQVMDLDEEYTKLTDEELQAKTDELKKRVQEDGESLDDILLEAFATAREASWRVLGQKHYKVQIMGGAGLHFGYVSEMKTGEGKTLTCVLPAYLNALSGKGVHVVTVNDYLAKRDAEWMGRVHRFLGLSTDVILSGKNPAERREAYNADITYGTNNEFGFDYLRDNMAHSLNDLVQRGHNYAIVDEVDSILIDEARTPLIISGPVEGSSKWFSAFAAIAPKLTRDIHYEVDERKKTVGVKEEGVEFVEDQLGIENLYAPEHSQLVSYLNNSIKAKELFTRDKDYIVRNGEVVIVDEFTGRILDGRRYNEGIHQAIEAKEHVEIKNENQTLATVTLQNYFRLYDKLAGMTGTAETEAAELKSTYKLDVAAIPTNKENKRKDNVDLIYKTQEAKFEAVAEDIAERVEIGQPVLVGTTSVERSEYLSRLLQRRGIKHNVLNAKYHEKEAEIVAQAGRLGAVTVATNMAGRGTDIVLGGNPDIIADINLRERGLDPVETPEEYEEAWDDEIEKVRKESKEEAEKVREVGGLYVLGTERHESRRIDNQLRGRSARQGDPGETRFYLSMRDDLMVRFVGQTMEAMMTRLNIPDDEAIDSKMVTNAIKGAQSQVESANFEMRKNVLKYDEVMNEQRKVIYGERRQILEGEDVEKQIRSMLKDTIEAYVDGATAEGYVEDWDLDTLWNALDSLYGPTFTHEELVEGDEYGRPGELSSSQLLDALLEDANREYDELEEKVSEVAGEEQMRGMERAALLNVVDQKWREHLYEMDYLKEGIGLRAMAQRDPLVEYQREGGDMFNRMKDGIKEETVRQLFLVRNQLKQAGQVHVEDPAAGNEGVAVDRATQTTMGG.

ATP-binding positions include Q86, 104–108 (GEGKT), and D493.

It belongs to the SecA family. Monomer and homodimer. Part of the essential Sec protein translocation apparatus which comprises SecA, SecYEG and auxiliary proteins SecDF. Other proteins may also be involved.

The protein localises to the cell membrane. It is found in the cytoplasm. The enzyme catalyses ATP + H2O + cellular proteinSide 1 = ADP + phosphate + cellular proteinSide 2.. Its function is as follows. Part of the Sec protein translocase complex. Interacts with the SecYEG preprotein conducting channel. Has a central role in coupling the hydrolysis of ATP to the transfer of proteins into and across the cell membrane, serving as an ATP-driven molecular motor driving the stepwise translocation of polypeptide chains across the membrane. This chain is Protein translocase subunit SecA 1, found in Corynebacterium jeikeium (strain K411).